The sequence spans 269 residues: Formamidopyrimidine-DNA glycosylase (269 aa).

Catalysis depends on Pro2, which acts as the Schiff-base intermediate with DNA. Catalysis depends on Glu3, which acts as the Proton donor. The active-site Proton donor; for beta-elimination activity is the Lys57. DNA contacts are provided by His90, Arg109, and Lys150. An FPG-type zinc finger spans residues 235–269 (FVYGRAGEPCRICGEQIESIKLGQRSTFFCRHCQY). The Proton donor; for delta-elimination activity role is filled by Arg259.

It belongs to the FPG family. As to quaternary structure, monomer. Zn(2+) is required as a cofactor.

It carries out the reaction Hydrolysis of DNA containing ring-opened 7-methylguanine residues, releasing 2,6-diamino-4-hydroxy-5-(N-methyl)formamidopyrimidine.. It catalyses the reaction 2'-deoxyribonucleotide-(2'-deoxyribose 5'-phosphate)-2'-deoxyribonucleotide-DNA = a 3'-end 2'-deoxyribonucleotide-(2,3-dehydro-2,3-deoxyribose 5'-phosphate)-DNA + a 5'-end 5'-phospho-2'-deoxyribonucleoside-DNA + H(+). Its function is as follows. Involved in base excision repair of DNA damaged by oxidation or by mutagenic agents. Acts as a DNA glycosylase that recognizes and removes damaged bases. Has a preference for oxidized purines, such as 7,8-dihydro-8-oxoguanine (8-oxoG). Has AP (apurinic/apyrimidinic) lyase activity and introduces nicks in the DNA strand. Cleaves the DNA backbone by beta-delta elimination to generate a single-strand break at the site of the removed base with both 3'- and 5'-phosphates. This chain is Formamidopyrimidine-DNA glycosylase, found in Photorhabdus laumondii subsp. laumondii (strain DSM 15139 / CIP 105565 / TT01) (Photorhabdus luminescens subsp. laumondii).